The primary structure comprises 155 residues: Transcriptional repressor NrdR (155 aa).

A zinc finger spans residues 3-34; that stretch reads CPYCQNADTRVVDSRLIGEGEQVRRRRQCPSC. The ATP-cone domain occupies 49-139; sequence PRVVKSDGRR…VYRRFEDVGA (91 aa).

This sequence belongs to the NrdR family. Zn(2+) serves as cofactor.

Functionally, negatively regulates transcription of bacterial ribonucleotide reductase nrd genes and operons by binding to NrdR-boxes. The sequence is that of Transcriptional repressor NrdR from Halorhodospira halophila (strain DSM 244 / SL1) (Ectothiorhodospira halophila (strain DSM 244 / SL1)).